We begin with the raw amino-acid sequence, 382 residues long: Lipid-A-disaccharide synthase (382 aa).

It belongs to the LpxB family.

It catalyses the reaction 2-N,3-O-bis[(3R)-3-hydroxytetradecanoyl]-alpha-D-glucosaminyl 1-phosphate + UDP-2-N,3-O-bis[(3R)-3-hydroxytetradecanoyl]-alpha-D-glucosamine = lipid A disaccharide (E. coli) + UDP + H(+). The catalysed reaction is a lipid X + a UDP-2-N,3-O-bis[(3R)-3-hydroxyacyl]-alpha-D-glucosamine = a lipid A disaccharide + UDP + H(+). Its pathway is glycolipid biosynthesis; lipid IV(A) biosynthesis; lipid IV(A) from (3R)-3-hydroxytetradecanoyl-[acyl-carrier-protein] and UDP-N-acetyl-alpha-D-glucosamine: step 5/6. Functionally, condensation of UDP-2,3-diacylglucosamine and 2,3-diacylglucosamine-1-phosphate to form lipid A disaccharide, a precursor of lipid A, a phosphorylated glycolipid that anchors the lipopolysaccharide to the outer membrane of the cell. This Citrobacter koseri (strain ATCC BAA-895 / CDC 4225-83 / SGSC4696) protein is Lipid-A-disaccharide synthase.